Consider the following 221-residue polypeptide: Endo-1,4-beta-xylanase 2 (221 aa).

An N-terminal signal peptide occupies residues 1–19; the sequence is MVAFTSLLAGFAAIAGVLS. The GH11 domain maps to 32-221; that stretch reads QTIGPGTGYS…SSGSASITVS (190 aa). N-linked (GlcNAc...) asparagine glycosylation is found at Asn69 and Asn92. Glu117 functions as the Nucleophile in the catalytic mechanism. The active-site Proton donor is Glu208.

It belongs to the glycosyl hydrolase 11 (cellulase G) family.

Its subcellular location is the secreted. The catalysed reaction is Endohydrolysis of (1-&gt;4)-beta-D-xylosidic linkages in xylans.. It participates in glycan degradation; xylan degradation. Its function is as follows. Endo-1,4-beta-xylanase involved in the hydrolysis of xylan, a major structural heterogeneous polysaccharide found in plant biomass representing the second most abundant polysaccharide in the biosphere, after cellulose. In Trichoderma harzianum (Hypocrea lixii), this protein is Endo-1,4-beta-xylanase 2 (Xyn2).